The following is a 334-amino-acid chain: Hydroxyproline O-arabinosyltransferase NOD3 (334 aa).

A helical; Signal-anchor transmembrane segment spans residues 1–18 (LLMVLGFFFATYNLVSMI).

Belongs to the RDN family.

It localises to the golgi apparatus membrane. It carries out the reaction trans-4-hydroxy-L-prolyl-[protein] + UDP-beta-L-arabinofuranose = O-(beta-L-arabinofuranosyl)-trans-4-hydroxy-L-prolyl-[protein] + UDP + H(+). Probable glycosyltransferase involved in the O-arabinosylation of several proteins including extensins and small signaling peptides. Catalyzes the transfer of the initial L-arabinose to the hydroxyl group of Hyp residues. Probably involved in the arabinosylation of CLAVATA3/ESR-related (CLE) signaling peptides that move from root to shoot, to interact with receptor kinase signaling that regulates nodulation. Involved in long distance nodulation signaling events. Involved in the autoregulation of nodulation (AON), a long distance systemic signaling from root to shoot and back again, which allows legumes to limit the number of root nodules formed based on available nitrogen and previous rhizobial colonization. This is Hydroxyproline O-arabinosyltransferase NOD3 from Pisum sativum (Garden pea).